We begin with the raw amino-acid sequence, 197 residues long: MEKFTTHTGVGVPLQRSNVDTDQIIPAVYLKRVTRTGFEDGLFSNWRQNDPNFVLNTETYKNGSVLIAGPDFGTGSSREHAVWALMDYGFRAVFSSRFADIFRGNSGKAGLLTGIMEQSDIELLWKLMEQTPGLELTVNLEKQIVTAGDVVISFEVDPYIRWRLMEGLDDAGLTLRKLDEIEDYEAKRPAFKPRTNA.

It belongs to the LeuD family. LeuD type 1 subfamily. In terms of assembly, heterodimer of LeuC and LeuD.

The enzyme catalyses (2R,3S)-3-isopropylmalate = (2S)-2-isopropylmalate. The protein operates within amino-acid biosynthesis; L-leucine biosynthesis; L-leucine from 3-methyl-2-oxobutanoate: step 2/4. Its function is as follows. Catalyzes the isomerization between 2-isopropylmalate and 3-isopropylmalate, via the formation of 2-isopropylmaleate. The chain is 3-isopropylmalate dehydratase small subunit from Corynebacterium glutamicum (strain R).